We begin with the raw amino-acid sequence, 396 residues long: Elongation factor Tu (396 aa).

Residues 10–206 (KPHINVGTIG…QMDAYIPEPQ (197 aa)) form the tr-type G domain. The segment at 19 to 26 (GHVDHGKT) is G1. 19 to 26 (GHVDHGKT) is a GTP binding site. Threonine 26 is a Mg(2+) binding site. The interval 60 to 64 (GITIA) is G2. The tract at residues 81 to 84 (DCPG) is G3. GTP contacts are provided by residues 81-85 (DCPGH) and 136-139 (NKAD). The G4 stretch occupies residues 136 to 139 (NKAD). The interval 174–176 (SAL) is G5.

The protein belongs to the TRAFAC class translation factor GTPase superfamily. Classic translation factor GTPase family. EF-Tu/EF-1A subfamily. As to quaternary structure, monomer.

The protein resides in the cytoplasm. It carries out the reaction GTP + H2O = GDP + phosphate + H(+). In terms of biological role, GTP hydrolase that promotes the GTP-dependent binding of aminoacyl-tRNA to the A-site of ribosomes during protein biosynthesis. This is Elongation factor Tu from Nitrosococcus oceani (strain ATCC 19707 / BCRC 17464 / JCM 30415 / NCIMB 11848 / C-107).